The following is a 478-amino-acid chain: Kynurenine 3-monooxygenase (478 aa).

FAD-binding positions include Val-19, 37–40 (YEAR), and Ala-57. L-kynurenine is bound by residues Arg-85 and Tyr-99. Residues Arg-111, Leu-136, Thr-172, Asp-304, and 317 to 318 (MN) each bind FAD. L-kynurenine is bound by residues Asn-363 and Tyr-398. 2 helical membrane passes run 385-404 (FLHA…VAFT) and 425-445 (GLFV…VHHL).

This sequence belongs to the aromatic-ring hydroxylase family. KMO subfamily. It depends on FAD as a cofactor. As to expression, highest activity in liver and kidney. Low activity in spleen, stomach, intestinal tract, esophagus, heart and lung.

It is found in the mitochondrion outer membrane. The enzyme catalyses L-kynurenine + NADPH + O2 + H(+) = 3-hydroxy-L-kynurenine + NADP(+) + H2O. It participates in cofactor biosynthesis; NAD(+) biosynthesis; quinolinate from L-kynurenine: step 1/3. Catalyzes the hydroxylation of L-kynurenine (L-Kyn) to form 3-hydroxy-L-kynurenine (L-3OHKyn). Required for synthesis of quinolinic acid, a neurotoxic NMDA receptor antagonist and potential endogenous inhibitor of NMDA receptor signaling in axonal targeting, synaptogenesis and apoptosis during brain development. Quinolinic acid may also affect NMDA receptor signaling in pancreatic beta cells, osteoblasts, myocardial cells, and the gastrointestinal tract. In Rattus norvegicus (Rat), this protein is Kynurenine 3-monooxygenase.